The following is a 267-amino-acid chain: tRNA pseudouridine synthase A (267 aa).

The Nucleophile role is filled by Asp-53. Tyr-114 contacts substrate.

Belongs to the tRNA pseudouridine synthase TruA family. As to quaternary structure, homodimer.

The enzyme catalyses uridine(38/39/40) in tRNA = pseudouridine(38/39/40) in tRNA. Formation of pseudouridine at positions 38, 39 and 40 in the anticodon stem and loop of transfer RNAs. The sequence is that of tRNA pseudouridine synthase A from Chlamydia muridarum (strain MoPn / Nigg).